The following is a 219-amino-acid chain: Large ribosomal subunit protein uL3 (219 aa).

The protein belongs to the universal ribosomal protein uL3 family. Part of the 50S ribosomal subunit. Forms a cluster with proteins L14 and L19.

One of the primary rRNA binding proteins, it binds directly near the 3'-end of the 23S rRNA, where it nucleates assembly of the 50S subunit. This Corynebacterium kroppenstedtii (strain DSM 44385 / JCM 11950 / CIP 105744 / CCUG 35717) protein is Large ribosomal subunit protein uL3.